Here is a 114-residue protein sequence, read N- to C-terminus: uncharacterized protein (114 aa).

G2 carries the N-myristoyl glycine; by host lipid modification. 2 helical membrane-spanning segments follow: residues 11-31 (FGLILVGAIIFTASYLWKDLL) and 44-64 (GLMWRSIYTILVTVILVLVAI). The interval 73-114 (VNKDSKDPKDKSIEFDDSPIRDGSSGTPDNSNEPTDLSVETS) is disordered. Residues 75-92 (KDSKDPKDKSIEFDDSPI) are compositionally biased toward basic and acidic residues. The span at 96–114 (SSGTPDNSNEPTDLSVETS) shows a compositional bias: polar residues.

The protein localises to the membrane. This is an uncharacterized protein from Acanthamoeba polyphaga (Amoeba).